Consider the following 980-residue polypeptide: LRR receptor-like serine/threonine-protein kinase SIK1 (980 aa).

Residues 1–24 (MAAARAPWLWWWVVVVVGVAVAEA) form the signal peptide. Topologically, residues 25 to 588 (ASGGGGGGDG…HGQRVNISKT (564 aa)) are extracellular. Residues asparagine 72 and asparagine 81 are each glycosylated (N-linked (GlcNAc...) asparagine). LRR repeat units follow at residues 75–98 (FAVLALNLSNLNLGGEISPAIGEL), 99–122 (KNLQFVDLKGNKLTGQIPDEIGDC), 124–146 (SLKYLDLSGNLLYGDIPFSISKL), 147–170 (KQLEELILKNNQLTGPIPSTLSQI), 171–194 (PNLKTLDLAQNQLTGDIPRLIYWN), 196–218 (VLQYLGLRGNSLTGTLSPDMCQL), 219–242 (TGLWYFDVRGNNLTGTIPESIGNC), 243–265 (TSFEILDISYNQISGEIPYNIGF), 266–289 (LQVATLSLQGNRLTGKIPDVIGLM), 290–312 (QALAVLDLSENELVGPIPSILGN), 314–337 (SYTGKLYLHGNKLTGVIPPELGNM), 338–361 (SKLSYLQLNDNELVGTIPAELGKL), 362–385 (EELFELNLANNNLQGPIPANISSC), 387–408 (ALNKFNVYGNKLNGSIPAGFQK), 409–433 (LESLTYLNLSSNNFKGNIPSELGHI), 435–457 (NLDTLDLSYNEFSGPVPATIGDL), 458–480 (EHLLELNLSKNHLDGPVPAEFGN), 481–505 (LRSVQVIDMSNNNLSGSLPEELGQL), 507–529 (NLDSLILNNNNLVGEIPAQLANC), and 531–554 (SLNNLNLSYNNLSGHVPMAKNFSK). 2 N-linked (GlcNAc...) asparagine glycosylation sites follow: asparagine 230 and asparagine 241. N-linked (GlcNAc...) asparagine glycans are attached at residues asparagine 312 and asparagine 336. N-linked (GlcNAc...) asparagine glycans are attached at residues asparagine 381, asparagine 399, and asparagine 416. Asparagine 464 and asparagine 493 each carry an N-linked (GlcNAc...) asparagine glycan. Residues asparagine 536, asparagine 541, asparagine 551, and asparagine 584 are each glycosylated (N-linked (GlcNAc...) asparagine). A helical membrane pass occupies residues 589–609 (AIACIILGFIILLCVLLLAIY). The Cytoplasmic segment spans residues 610–980 (KTNQPQPLVK…FGEVISKHTM (371 aa)). Residues 653–923 (LSEKYIIGYG…EVARVLLSLL (271 aa)) enclose the Protein kinase domain. Residues 659–667 (IGYGASSTV) and lysine 681 contribute to the ATP site. Catalysis depends on aspartate 778, which acts as the Proton acceptor.

This sequence belongs to the protein kinase superfamily. Ser/Thr protein kinase family. In terms of processing, autophosphorylated. In terms of tissue distribution, expressed in nodes, vascular bundles of stems, and anthers.

It is found in the cell membrane. It carries out the reaction L-seryl-[protein] + ATP = O-phospho-L-seryl-[protein] + ADP + H(+). The enzyme catalyses L-threonyl-[protein] + ATP = O-phospho-L-threonyl-[protein] + ADP + H(+). Its function is as follows. Receptor kinase involved in salt drought stress responses. Acts as a positive regulator of salt and drought tolerance. May promote salt and drought tolerance through the induction of the activities of antioxidative enzymes, such as peroxidase, superoxide dismutase and catalase. May be involved in the control of stomatal development in leaf epidermis. Possesses kinase activity in vitro. Does not seem to be involved in heat tolerance. This is LRR receptor-like serine/threonine-protein kinase SIK1 from Oryza sativa subsp. japonica (Rice).